The sequence spans 305 residues: LysM and putative peptidoglycan-binding domain-containing protein 3 (305 aa).

Over 1–216 the chain is Extracellular; it reads MAGRNQNRTV…PYYGADWGIG (216 aa). 2 N-linked (GlcNAc...) asparagine glycosylation sites follow: N7 and N26. A Phosphoserine modification is found at S55. In terms of domain architecture, LysM spans 65-109; sequence LTKDIQEGDTLNAVALQYCCTVADIKRVNNLISDQDFFALRSIKI. An N-linked (GlcNAc...) asparagine glycan is attached at N199. Residues 217–237 traverse the membrane as a helical segment; the sequence is WWTAVVIMLIVGIITPVFYLL. Topologically, residues 238-305 are cytoplasmic; the sequence is YYEILAKVDV…PQAHDAQHKT (68 aa). The tract at residues 253 to 305 is disordered; sequence VGSSHLHPGLTPPTQHREMENEIGPTKGIPVGQQDDHKLYRQDPQAHDAQHKT. Over residues 286–305 the composition is skewed to basic and acidic residues; that stretch reads QDDHKLYRQDPQAHDAQHKT.

It localises to the cell membrane. It is found in the golgi apparatus. Functionally, essential for Golgi structural integrity. In Mus musculus (Mouse), this protein is LysM and putative peptidoglycan-binding domain-containing protein 3 (Lysmd3).